A 193-amino-acid polypeptide reads, in one-letter code: Orotate phosphoribosyltransferase (193 aa).

A 5-phospho-alpha-D-ribose 1-diphosphate-binding site is contributed by 114–122 (EDVITTGGS). Thr-118 and Arg-146 together coordinate orotate.

It belongs to the purine/pyrimidine phosphoribosyltransferase family. PyrE subfamily. As to quaternary structure, homodimer. The cofactor is Mg(2+).

The enzyme catalyses orotidine 5'-phosphate + diphosphate = orotate + 5-phospho-alpha-D-ribose 1-diphosphate. Its pathway is pyrimidine metabolism; UMP biosynthesis via de novo pathway; UMP from orotate: step 1/2. Catalyzes the transfer of a ribosyl phosphate group from 5-phosphoribose 1-diphosphate to orotate, leading to the formation of orotidine monophosphate (OMP). This is Orotate phosphoribosyltransferase from Chlorobaculum parvum (strain DSM 263 / NCIMB 8327) (Chlorobium vibrioforme subsp. thiosulfatophilum).